The chain runs to 358 residues: Phosphoribosylformylglycinamidine cyclo-ligase (358 aa).

The protein belongs to the AIR synthase family.

It is found in the cytoplasm. The enzyme catalyses 2-formamido-N(1)-(5-O-phospho-beta-D-ribosyl)acetamidine + ATP = 5-amino-1-(5-phospho-beta-D-ribosyl)imidazole + ADP + phosphate + H(+). The protein operates within purine metabolism; IMP biosynthesis via de novo pathway; 5-amino-1-(5-phospho-D-ribosyl)imidazole from N(2)-formyl-N(1)-(5-phospho-D-ribosyl)glycinamide: step 2/2. In Nitrosococcus oceani (strain ATCC 19707 / BCRC 17464 / JCM 30415 / NCIMB 11848 / C-107), this protein is Phosphoribosylformylglycinamidine cyclo-ligase.